The following is a 201-amino-acid chain: Small ribosomal subunit protein uS4c (201 aa).

A disordered region spans residues 15 to 45 (LGDLPGLSRKAIKRSYPPGEHGQKSRKPSEY). Residues 35-45 (HGQKSRKPSEY) show a composition bias toward basic and acidic residues. One can recognise an S4 RNA-binding domain in the interval 90–153 (MRLDNTVFRL…ASRKLVENYL (64 aa)).

The protein belongs to the universal ribosomal protein uS4 family. In terms of assembly, part of the 30S ribosomal subunit. Contacts protein S5. The interaction surface between S4 and S5 is involved in control of translational fidelity.

It localises to the plastid. The protein resides in the chloroplast. Functionally, one of the primary rRNA binding proteins, it binds directly to 16S rRNA where it nucleates assembly of the body of the 30S subunit. With S5 and S12 plays an important role in translational accuracy. The protein is Small ribosomal subunit protein uS4c (rps4) of Pyropia yezoensis (Susabi-nori).